The sequence spans 124 residues: Small ribosomal subunit protein uS12 (124 aa).

At D89 the chain carries 3-methylthioaspartic acid. The tract at residues 104–124 (TAGVENRKQSRSKYGAKRPKK) is disordered. Residues 112-124 (QSRSKYGAKRPKK) are compositionally biased toward basic residues.

Belongs to the universal ribosomal protein uS12 family. In terms of assembly, part of the 30S ribosomal subunit. Contacts proteins S8 and S17. May interact with IF1 in the 30S initiation complex.

In terms of biological role, with S4 and S5 plays an important role in translational accuracy. Its function is as follows. Interacts with and stabilizes bases of the 16S rRNA that are involved in tRNA selection in the A site and with the mRNA backbone. Located at the interface of the 30S and 50S subunits, it traverses the body of the 30S subunit contacting proteins on the other side and probably holding the rRNA structure together. The combined cluster of proteins S8, S12 and S17 appears to hold together the shoulder and platform of the 30S subunit. In Pseudothermotoga lettingae (strain ATCC BAA-301 / DSM 14385 / NBRC 107922 / TMO) (Thermotoga lettingae), this protein is Small ribosomal subunit protein uS12.